Reading from the N-terminus, the 164-residue chain is Transcription elongation factor GreA (164 aa).

Positions 50-76 form a coiled coil; it reads YHAAREEQGQQEARIRQLQELLNNAKV.

Belongs to the GreA/GreB family.

Functionally, necessary for efficient RNA polymerase transcription elongation past template-encoded arresting sites. The arresting sites in DNA have the property of trapping a certain fraction of elongating RNA polymerases that pass through, resulting in locked ternary complexes. Cleavage of the nascent transcript by cleavage factors such as GreA or GreB allows the resumption of elongation from the new 3'terminus. GreA releases sequences of 2 to 3 nucleotides. This Mycolicibacterium smegmatis (strain ATCC 700084 / mc(2)155) (Mycobacterium smegmatis) protein is Transcription elongation factor GreA.